Reading from the N-terminus, the 213-residue chain is Thymidylate kinase (213 aa).

ATP is bound at residue 10–17 (GLEGAGKT).

The protein belongs to the thymidylate kinase family.

The enzyme catalyses dTMP + ATP = dTDP + ADP. In terms of biological role, phosphorylation of dTMP to form dTDP in both de novo and salvage pathways of dTTP synthesis. This is Thymidylate kinase from Klebsiella pneumoniae (strain 342).